Reading from the N-terminus, the 371-residue chain is Phosphate acyltransferase (371 aa).

This sequence belongs to the PlsX family. As to quaternary structure, homodimer. Probably interacts with PlsY.

Its subcellular location is the cytoplasm. The enzyme catalyses a fatty acyl-[ACP] + phosphate = an acyl phosphate + holo-[ACP]. Its pathway is lipid metabolism; phospholipid metabolism. Its function is as follows. Catalyzes the reversible formation of acyl-phosphate (acyl-PO(4)) from acyl-[acyl-carrier-protein] (acyl-ACP). This enzyme utilizes acyl-ACP as fatty acyl donor, but not acyl-CoA. In Ruegeria pomeroyi (strain ATCC 700808 / DSM 15171 / DSS-3) (Silicibacter pomeroyi), this protein is Phosphate acyltransferase.